A 508-amino-acid chain; its full sequence is Cytochrome P450 monooxygenase lepD (508 aa).

The chain crosses the membrane as a helical span at residues 22-42; that stretch reads IAAAVAVVASIVIYLALSSFF. 2 N-linked (GlcNAc...) asparagine glycosylation sites follow: asparagine 53 and asparagine 416. Cysteine 454 contributes to the heme binding site.

The protein belongs to the cytochrome P450 family. Heme serves as cofactor.

The protein localises to the membrane. Cytochrome P450 monooxygenase; part of the gene cluster 23 that mediates the biosynthesis of a family of 2-pyridones known as leporins. The hybrid PKS-NRPS synthetase lepA and the enoyl reductase lepG are responsible for fusion of phenylalanine with a hexaketide and subsequent release of the stable tetramic acid precursor, pre-leporin C. Because lepA lacks a designated enoylreductase (ER) domain, the required activity is provided the enoyl reductase lepG. It is possible that the dehydrogenase lepF also participates in production of pre-leporin C. Cytochrome P450 monooxygenase lepH is then required for the ring expansion step to yield leporin C. Leporin C is then presumably further oxidized by the N-hydroxylase lepD to form leporin B. LepI may possess a function in biosynthesis upstream of lepA. Leporin B is further oxidized in the presence of ferric ion to give the leporin B trimer-iron chelate, but whether or not this reaction is catalyzed by an enzyme in the pathway or by ferric ion is not determined yet. This chain is Cytochrome P450 monooxygenase lepD, found in Aspergillus flavus (strain ATCC 200026 / FGSC A1120 / IAM 13836 / NRRL 3357 / JCM 12722 / SRRC 167).